Reading from the N-terminus, the 401-residue chain is Argininosuccinate synthase (401 aa).

Residue 8-16 (AYSGGLDTS) participates in ATP binding. An L-citrulline-binding site is contributed by Tyr87. ATP is bound at residue Gly117. L-aspartate is bound by residues Thr119, Asn123, and Asp124. Asn123 lines the L-citrulline pocket. L-citrulline-binding residues include Arg127, Ser175, Glu259, and Tyr271.

Belongs to the argininosuccinate synthase family. Type 1 subfamily. Homotetramer.

It localises to the cytoplasm. The catalysed reaction is L-citrulline + L-aspartate + ATP = 2-(N(omega)-L-arginino)succinate + AMP + diphosphate + H(+). Its pathway is amino-acid biosynthesis; L-arginine biosynthesis; L-arginine from L-ornithine and carbamoyl phosphate: step 2/3. In Arthrobacter sp. (strain FB24), this protein is Argininosuccinate synthase.